A 487-amino-acid polypeptide reads, in one-letter code: Cytochrome P450 716A75 (487 aa).

A helical membrane pass occupies residues 5–25 (FVSLLSLFLLILLPLSLLFLF). C434 contacts heme.

Belongs to the cytochrome P450 family. It depends on heme as a cofactor.

It is found in the membrane. The catalysed reaction is beta-amyrin + reduced [NADPH--hemoprotein reductase] + O2 = erythrodiol + oxidized [NADPH--hemoprotein reductase] + H2O + H(+). It carries out the reaction erythrodiol + reduced [NADPH--hemoprotein reductase] + O2 = oleanolic aldehyde + oxidized [NADPH--hemoprotein reductase] + 2 H2O + H(+). It catalyses the reaction oleanolic aldehyde + reduced [NADPH--hemoprotein reductase] + O2 = oleanolate + oxidized [NADPH--hemoprotein reductase] + H2O + 2 H(+). Catalyzes the C-28 oxidation of beta-amyrin to form erythrodiol. Catalyzes the C-28 oxidation of erythrodiol to form oleanolic aldehyde. Catalyzes the C-28 oxidation of oleanolic aldehyde to form oleanolate. In Maesa lanceolata (False assegai), this protein is Cytochrome P450 716A75.